Consider the following 589-residue polypeptide: Pentalenolactone D synthase (589 aa).

FAD is bound by residues 60 to 61, 82 to 83, 90 to 91, 102 to 103, Tyr-108, Val-152, and Met-491; these read IG, DE, TW, and DV.

The protein belongs to the FAD-binding monooxygenase family. The cofactor is FAD.

The enzyme catalyses 1-deoxy-11-oxopentalenate + NADPH + O2 + H(+) = pentalenolactone D + NADP(+) + H2O. The protein operates within antibiotic biosynthesis; pentalenolactone biosynthesis. Its function is as follows. Catalyzes the flavin-dependent Baeyer-Villiger oxidation of 1-deoxy-11-oxopentalenic acid to pentalenolactone D in the biosynthesis of pentalenolactone antibiotic. In Streptomyces arenae, this protein is Pentalenolactone D synthase (pntE).